A 208-amino-acid chain; its full sequence is MATQAAGIFNSAITTAATSGVKKLHFFSTTHRPKSLSFTKTAIRAEKTDSSAAAAAAPATKEAPVGFTPPQLDPNTPSPIFAGSTGGLLRKAQVEEFYVITWNSPKEQIFEMPTGGAAIMREGPNLLKLARKEQCLALGTRLRSKYKITYQFYRVFPNGEVQYLHPKDGVYPEKANPGREGVGLNMRSIGKNVSPIEVKFTGKQSYDL.

A chloroplast-targeting transit peptide spans 1–45 (MATQAAGIFNSAITTAATSGVKKLHFFSTTHRPKSLSFTKTAIRA). T48 carries the post-translational modification Phosphothreonine. The disordered stretch occupies residues 49–72 (DSSAAAAAAPATKEAPVGFTPPQL). Residues 50 to 64 (SSAAAAAAPATKEAP) show a composition bias toward low complexity. The tract at residues 141-149 (RLRSKYKIT) is ferredoxin and ferredoxin-oxidoreductase binding.

It belongs to the PsaD family. Interacts with PGRL1A and PGRL1B. In terms of processing, phosphorylated by a threonine specific thylakoid kinase in a light activated and redox-dependent manner.

The protein localises to the plastid. It is found in the chloroplast thylakoid membrane. Functionally, psaD can form complexes with ferredoxin and ferredoxin-oxidoreductase in photosystem I (PS I) reaction center. PSAD may encode the ferredoxin-docking protein. The chain is Photosystem I reaction center subunit II-1, chloroplastic (psaD1) from Arabidopsis thaliana (Mouse-ear cress).